We begin with the raw amino-acid sequence, 504 residues long: CaM kinase-like vesicle-associated protein (504 aa).

In terms of domain architecture, Protein kinase spans 24-286 (YDLGQVVKTE…AEEAISHEWI (263 aa)). Residues 378–504 (KSDDMASADR…AQESQRVETS (127 aa)) are disordered. Ser384 carries the phosphoserine modification. Residues 390–431 (TPATDGSATPATDGSVTPATDGSITPATDGSVTPATDRSATP) show a composition bias toward polar residues. Residues Thr438 and Thr462 each carry the phosphothreonine modification. Residues 445-470 (TVPAAQSSAAPAAKAAATPEPAVAQP) show a composition bias toward low complexity.

The protein belongs to the protein kinase superfamily. CAMK Ser/Thr protein kinase family. In terms of assembly, interacts with calmodulin, in the presence of calcium. Ca(2+) serves as cofactor. As to expression, expressed in brain and weakly in eye. Not detected in liver, kidney, spleen, thymus, bladder, aorta, lung, intestine, esophagus, stomach, skeletal muscle, heart, diaphragm, uterus, tail skin, submaxillary gland, prostate, ear, epididymis, placenta, pancreas, ovary, testis, adrenal gland, parathyroid gland, thyroid gland, pineal gland, pituitary and sciatic nerve. In adult hippocampus, predominantly expressed in caudate nucleus, cortex, hypothalamus, olfactory bulb, and midbrain and faintly in pons, brainstem and spinal cord.

It localises to the cell membrane. The protein localises to the cytoplasmic vesicle membrane. In terms of biological role, has no detectable kinase activity in vitro. This Rattus norvegicus (Rat) protein is CaM kinase-like vesicle-associated protein (Camkv).